We begin with the raw amino-acid sequence, 847 residues long: Bifunctional protein argC, mitochondrial (847 aa).

The segment at 100 to 331 (QIVLVKIGGG…PPSTSITITS (232 aa)) is acetylglutamate kinase. Residues 352 to 508 (GEVMHSHESP…CLSQSSTYLS (157 aa)) enclose the N-acetyltransferase domain. Positions 531 to 846 (FRVGLIGARG…LDELASIKNE (316 aa)) are N-acetyl-gamma-glutamyl-phosphate reductase. Cys-665 is an active-site residue.

It in the N-terminal section; belongs to the acetylglutamate kinase family. This sequence in the C-terminal section; belongs to the NAGSA dehydrogenase family.

Its subcellular location is the mitochondrion. It carries out the reaction N-acetyl-L-glutamate 5-semialdehyde + phosphate + NADP(+) = N-acetyl-L-glutamyl 5-phosphate + NADPH + H(+). It catalyses the reaction N-acetyl-L-glutamate + ATP = N-acetyl-L-glutamyl 5-phosphate + ADP. It participates in amino-acid biosynthesis; L-arginine biosynthesis; N(2)-acetyl-L-ornithine from L-glutamate: step 2/4. Its pathway is amino-acid biosynthesis; L-arginine biosynthesis; N(2)-acetyl-L-ornithine from L-glutamate: step 3/4. The protein is Bifunctional protein argC, mitochondrial (argC) of Dictyostelium discoideum (Social amoeba).